Consider the following 246-residue polypeptide: Exosome complex component Rrp41 (246 aa).

Belongs to the RNase PH family. Rrp41 subfamily. Component of the archaeal exosome complex. Forms a hexameric ring-like arrangement composed of 3 Rrp41-Rrp42 heterodimers. The hexameric ring associates with a trimer of Rrp4 and/or Csl4 subunits.

It localises to the cytoplasm. Its function is as follows. Catalytic component of the exosome, which is a complex involved in RNA degradation. Has 3'-&gt;5' exoribonuclease activity. Can also synthesize heteromeric RNA-tails. The polypeptide is Exosome complex component Rrp41 (Pyrobaculum calidifontis (strain DSM 21063 / JCM 11548 / VA1)).